The chain runs to 116 residues: Methionine-R-sulfoxide reductase B1 (116 aa).

In terms of domain architecture, MsrB spans 1 to 106 (MSFCSFFGGE…FSSSLKFIPK (106 aa)). Positions 23, 26, 71, and 74 each coordinate Zn(2+). Selenocysteine 95 functions as the Nucleophile in the catalytic mechanism. Position 95 (selenocysteine 95) is a non-standard amino acid, selenocysteine.

This sequence belongs to the MsrB Met sulfoxide reductase family. The cofactor is Zn(2+). Post-translationally, truncated MSRB1/SEPX1 proteins produced by failed UGA/Sec decoding are ubiquitinated by the CRL2(FEM1C) E3 ubiquitin-protein ligase complex.

The protein localises to the cytoplasm. Its subcellular location is the nucleus. It is found in the cytoskeleton. It carries out the reaction L-methionyl-[protein] + [thioredoxin]-disulfide + H2O = L-methionyl-(R)-S-oxide-[protein] + [thioredoxin]-dithiol. It catalyses the reaction [thioredoxin]-disulfide + L-methionine + H2O = L-methionine (R)-S-oxide + [thioredoxin]-dithiol. Methionine-sulfoxide reductase that specifically reduces methionine (R)-sulfoxide back to methionine. While in many cases, methionine oxidation is the result of random oxidation following oxidative stress, methionine oxidation is also a post-translational modification that takes place on specific residue. Acts as a regulator of actin assembly by reducing methionine (R)-sulfoxide mediated by MICALs (MICAL1, MICAL2 or MICAL3) on actin, thereby promoting filament repolymerization. Plays a role in innate immunity by reducing oxidized actin, leading to actin repolymerization in macrophages. The polypeptide is Methionine-R-sulfoxide reductase B1 (Msrb1) (Rattus norvegicus (Rat)).